The chain runs to 160 residues: Ribosomal RNA large subunit methyltransferase H (160 aa).

The S-adenosyl-L-methionine site is built by Leu76 and Gly108.

Belongs to the RNA methyltransferase RlmH family. In terms of assembly, homodimer.

The protein localises to the cytoplasm. The enzyme catalyses pseudouridine(1915) in 23S rRNA + S-adenosyl-L-methionine = N(3)-methylpseudouridine(1915) in 23S rRNA + S-adenosyl-L-homocysteine + H(+). In terms of biological role, specifically methylates the pseudouridine at position 1915 (m3Psi1915) in 23S rRNA. In Rhodopseudomonas palustris (strain BisB18), this protein is Ribosomal RNA large subunit methyltransferase H.